The chain runs to 401 residues: Adaptive-response sensory kinase SasA (401 aa).

One can recognise a Histidine kinase domain in the interval 175-400 (MLVHDLRNPL…WFHFTLPVYP (226 aa)). The residue at position 178 (His178) is a Phosphohistidine; by autocatalysis.

As to quaternary structure, homooligomerizes. Interacts with KaiC. Participates in the KaiABC clock complex, whose core is composed of a KaiC homohexamer, 6 KaiB and up to 6 KaiA dimers. SasA and KaiB(fs) compete to bind to KaiC.

It catalyses the reaction ATP + protein L-histidine = ADP + protein N-phospho-L-histidine.. Functionally, member of the two-component regulatory system SasA/RpaA involved in genome-wide circadian gene expression. One of several clock output pathways. Participates in the Kai clock protein complex, the main circadian regulator in cyanobacteria, via its interaction with KaiC. KaiC enhances the autophosphorylation activity of SasA, which then transfers its phosphate group to RpaA to activate it. In addition to its output function, recruits fold-shifted KaiB (KaiB(fs)) to KaiC to cooperatively form the KaiB(6):KaiC(6) complex (independent of SasA kinase activity). Required for robustness of the circadian rhythm of gene expression and is involved in clock output, also required for adaptation to light/dark cycles. The chain is Adaptive-response sensory kinase SasA from Nostoc sp. (strain PCC 7120 / SAG 25.82 / UTEX 2576).